A 377-amino-acid chain; its full sequence is Mitogen-activated protein kinase HOG1 (377 aa).

The region spanning 23–305 (YTELNPVGMG…AVEGLTHPYM (283 aa)) is the Protein kinase domain. Residues 29–37 (VGMGAFGLV) and K52 each bind ATP. D144 serves as the catalytic Proton acceptor. At T174 the chain carries Phosphothreonine. A TXY motif is present at residues 174 to 176 (TGY). Y176 is subject to Phosphotyrosine. Residues 354 to 377 (NETEGSEQPDSQVEQNNLDSANGA) are disordered. The span at 359-377 (SEQPDSQVEQNNLDSANGA) shows a compositional bias: polar residues.

It belongs to the protein kinase superfamily. Ser/Thr protein kinase family. MAP kinase subfamily. HOG1 sub-subfamily. It depends on Mg(2+) as a cofactor. In terms of processing, dually phosphorylated on Thr-174 and Tyr-176, which activates the enzyme. Phosphorylated in response to oxidative and salt stress.

The protein resides in the cytoplasm. It is found in the nucleus. The catalysed reaction is L-seryl-[protein] + ATP = O-phospho-L-seryl-[protein] + ADP + H(+). The enzyme catalyses L-threonyl-[protein] + ATP = O-phospho-L-threonyl-[protein] + ADP + H(+). With respect to regulation, activated by tyrosine and threonine phosphorylation. Proline-directed serine/threonine-protein kinase involved in a signal transduction pathway that is activated by changes in the osmolarity of the extracellular environment. Controls osmotic regulation of transcription of target genes. Regulates stress-induced production and accumulation of glycerol and D-arabitol. HOG1 is also involved in virulence, morphogenesis and oxidative stress response especially through its role in chlamydospore formation, an oxygen-dependent morphogenetic program. This chain is Mitogen-activated protein kinase HOG1 (HOG1), found in Candida albicans (strain SC5314 / ATCC MYA-2876) (Yeast).